Here is an 834-residue protein sequence, read N- to C-terminus: Prominin-2 (834 aa).

Positions 1–26 (MKHTLALLAPLLGLGLGLALSQLAAG) are cleaved as a signal peptide. Residues 27 to 106 (ATDCKFLGPA…NEVVRYEAGY (80 aa)) lie on the Extracellular side of the membrane. A helical transmembrane segment spans residues 107 to 127 (VVCAVIAGLYLLLVPTAGLCF). The Cytoplasmic portion of the chain corresponds to 128-153 (CCCRCHRRCGGRVKTEHKALACERAA). Residues 154–174 (LMVFLLLTTLLLLIGVVCAFV) traverse the membrane as a helical segment. The Extracellular portion of the chain corresponds to 175–426 (TNQRTHEQMG…EVQRYETYRW (252 aa)). Asn-270 carries an N-linked (GlcNAc...) asparagine glycan. A helical membrane pass occupies residues 427-447 (IVGCVLCSVVLFVVLCNLLGL). The Cytoplasmic portion of the chain corresponds to 448–472 (NLGIWGLSARDDPSHPEAKGEAGAR). The chain crosses the membrane as a helical span at residues 473–493 (FLMAGVGLSFLFAAPLILLVF). The Extracellular segment spans residues 494–779 (ATFLVGGNVQ…LCDMMADPWN (286 aa)). Ser-727 carries the post-translational modification Phosphoserine. Residues 780-800 (AFWFCLAWCTFFLIPSIIFAV) traverse the membrane as a helical segment. Over 801–834 (KTSKYFRPIRKRLSSTSSEETQLFHIPRVTSLKL) the chain is Cytoplasmic. Position 818 is a phosphoserine (Ser-818).

The protein belongs to the prominin family. As to quaternary structure, binds cholesterol. In terms of processing, glycosylated. Present in saliva within small membrane particles (at protein level). Expressed in kidney, prostate, trachea, esophagus, salivary gland, thyroid gland, mammary gland adrenal gland, placenta, stomach, spinal cord and liver. In submucosal tumor, expressed in spindle-shaped or stellate stromal cells. Expressed in prostate cancer cell lines.

It is found in the apical cell membrane. It localises to the basolateral cell membrane. Its subcellular location is the cell projection. The protein localises to the microvillus membrane. The protein resides in the cilium membrane. This is Prominin-2 (PROM2) from Homo sapiens (Human).